The following is a 476-amino-acid chain: NAD(+) hydrolase ThsA (476 aa).

A Deacetylase sirtuin-type domain is found at 4-283 (NPIVELFIKD…QRIENNIKTK (280 aa)). 3 residues coordinate NAD(+): Ala23, Asp114, and His152. Residue His152 is the Proton acceptor of the active site. The tract at residues 284–476 (TVFLSGSAVE…IIEFVEILSN (193 aa)) is SLOG (STALD) domain, binds 3'cADPR. 3'cADPR-binding residues include Gly289, Ser290, Leu326, Phe357, Arg371, Lys388, Gly399, and Glu403.

This sequence belongs to the soluble Thoeris ThsA family. In terms of assembly, homotetramer formed by dimer of dimers; homooctamers are occasionally seen. Not seen to interact with ThsB. In the absence of the signal generated by ThsB, 63% monomer and 20% homotetramer; in the presence of the ThsB signal product 40% of the protein is dimeric. Homotetramer in solution; probably dimerizes via the N-terminal sirtuin-like domain.

It localises to the cytoplasm. The catalysed reaction is NAD(+) + H2O = ADP-D-ribose + nicotinamide + H(+). Its activity is regulated as follows. Activated by a molecule generated by endogenous ThsB (AC J8G8J6) or ThsB' (AC J8CSK2); activation in vitro is 50-100x more sensitive to 3' cyclic ADP-D-ribose (3'cADPR) than 2'cADPR. 3'cADPR activates the NADase function of ThsA by binding to the SLOG domain, which changes its tetramer organization, allowing NAD to access the active site. Also activated by a signal molecule generated by B.dafuensis TIR1 (AC A0A5B8Z670) and TIR2 (AC A0A5B8Z260), and by BdTIR (AC I1GTC2), a plant protein involved in defense against bacterial infection. The signal produced by BdTIR is probably 2'cADPR, which activates this protein, the signal produced by endogenous ThsB' is probably 3'cADPR. In terms of biological role, NAD(+) hydrolyzing component (NADase) of the Thoeris antiviral defense system, composed of ThsA and ThsB. Activated by a signal molecule generated by endogenous ThsB (AC J8G8J6) or ThsB' (AC J8CSK2, probably 3'cADPR), by TIR1 and TIR2 from B.dafuensis or by BdTIR from B.distachyon (AC I1GTC2, probably 2'cADPR). Upon activation binds and hydrolyzes NAD(+), leading to cell death and inhibition of phage replication. Not seen to bind DNA. Activation is 50-100x more sensitive to 3' cyclic ADP-D-ribose (3'cADPR) than 2'cADPR. In another paper ThsA is not activated by any tested cADPR isomer, although it binds 3'cADPR; it was suggested the protein is already in a fully active state. Expression of ThsA and ThsB in B.subtilis (strain BEST7003) confers resistance to phages phi29, SBSphiC, SBSphiJ and SPO1. At multiplicity of infection (MOI) of 0.05 Thoeris-encoding cultures grow normally when infected with SPO1, at MOI 5 cultures collapse prematurely by 90 minutes post-infection, thus the phage are not able to complete a replication cycle. NAD(+) levels fall and ADP-D-ribose levels rise 60 minutes post-infection. Thoeris cultures eventually recover, but retain the same susceptibility to SPO1. This is NAD(+) hydrolase ThsA from Bacillus cereus (strain MSX-D12).